Reading from the N-terminus, the 120-residue chain is uncharacterized protein (120 aa).

2 helical membrane-spanning segments follow: residues 8-28 and 55-75; these read PFVT…CTLV and FLEN…IGIL.

Its subcellular location is the membrane. This is an uncharacterized protein from Saccharomyces cerevisiae (strain ATCC 204508 / S288c) (Baker's yeast).